The chain runs to 329 residues: Cytosolic arginine sensor for mTORC1 subunit 2 (329 aa).

2 ACT domains span residues alanine 72–leucine 139 and glutamate 262–glutamine 322.

The protein belongs to the GATS family. In terms of assembly, may form homodimers and heterodimers.

It localises to the cytoplasm. The protein resides in the cytosol. Functionally, functions as a negative regulator of the TORC1 signaling pathway. This Xenopus tropicalis (Western clawed frog) protein is Cytosolic arginine sensor for mTORC1 subunit 2.